Reading from the N-terminus, the 426-residue chain is Phosphomethylpyrimidine synthase (426 aa).

Substrate contacts are provided by residues N66, M95, Y124, H163, S185 to G187, D226 to R229, and E265. Zn(2+) is bound at residue H269. Y292 serves as a coordination point for substrate. Position 333 (H333) interacts with Zn(2+). C407, C410, and C414 together coordinate [4Fe-4S] cluster.

The protein belongs to the ThiC family. [4Fe-4S] cluster is required as a cofactor.

It carries out the reaction 5-amino-1-(5-phospho-beta-D-ribosyl)imidazole + S-adenosyl-L-methionine = 4-amino-2-methyl-5-(phosphooxymethyl)pyrimidine + CO + 5'-deoxyadenosine + formate + L-methionine + 3 H(+). The protein operates within cofactor biosynthesis; thiamine diphosphate biosynthesis. Functionally, catalyzes the synthesis of the hydroxymethylpyrimidine phosphate (HMP-P) moiety of thiamine from aminoimidazole ribotide (AIR) in a radical S-adenosyl-L-methionine (SAM)-dependent reaction. The chain is Phosphomethylpyrimidine synthase from Thermococcus gammatolerans (strain DSM 15229 / JCM 11827 / EJ3).